Reading from the N-terminus, the 216-residue chain is Sperm microtubule inner protein 8 (216 aa).

In terms of assembly, microtubule inner protein component of sperm flagellar doublet microtubules. As to expression, expressed in sperm.

It localises to the cytoplasm. The protein resides in the cytoskeleton. Its subcellular location is the flagellum axoneme. In terms of biological role, microtubule inner protein (MIP) part of the dynein-decorated doublet microtubules (DMTs) in flagellum axoneme. May serve to reinforce and thus stabilize the microtubule structure in the sperm flagella. This is Sperm microtubule inner protein 8 (SPMIP8) from Bos taurus (Bovine).